The sequence spans 211 residues: UPF0637 protein ABC2405 (211 aa).

Belongs to the UPF0637 family.

In Shouchella clausii (strain KSM-K16) (Alkalihalobacillus clausii), this protein is UPF0637 protein ABC2405.